Consider the following 164-residue polypeptide: Kunitz-type proteinase inhibitor BbCI (164 aa).

Belongs to the protease inhibitor I3 (leguminous Kunitz-type inhibitor) family.

It is found in the secreted. Inhibits T.cruzi cruzipain. The chain is Kunitz-type proteinase inhibitor BbCI from Bauhinia bauhinioides (Perlebia bauhinoides).